We begin with the raw amino-acid sequence, 437 residues long: Citrate synthase (437 aa).

Residues H316 and D372 contribute to the active site.

Belongs to the citrate synthase family. In terms of assembly, homohexamer.

It carries out the reaction oxaloacetate + acetyl-CoA + H2O = citrate + CoA + H(+). Its pathway is carbohydrate metabolism; tricarboxylic acid cycle; isocitrate from oxaloacetate: step 1/2. Its activity is regulated as follows. Weakly inhibited by ATP (apparent Ki = 10 mm). In Corynebacterium glutamicum (strain ATCC 13032 / DSM 20300 / JCM 1318 / BCRC 11384 / CCUG 27702 / LMG 3730 / NBRC 12168 / NCIMB 10025 / NRRL B-2784 / 534), this protein is Citrate synthase (gltA).